We begin with the raw amino-acid sequence, 329 residues long: MQGSVTEFLKPRLVDIEQVSLTHAKVTLEPLERGFGHTLGNALRRILLSSMPGCAVTEVEIEGVLHEYSTKEGVQEDILEILLNLKGLAVKVEGKDEVIITLNKSGAGPVVAGDITHDGDVEIANPEHVICHLTDDNAEISMRIKVERGRGYVPSTARIHTEEDERPIGRLLVDATYSPVDKISYAVEAARVEQRTDLDKLVIDMETNGTLDPEEAIRRAATILAEQLDAFVDLRDVRVPEEKEEKPEFDPILLRPVDDLELTVRSANCLKAEAIHYIGDLVQRTEVELLKTPNLGKKSLTEIKDVLASRGLSLGMRLENWPPASIAED.

An alpha N-terminal domain (alpha-NTD) region spans residues 1-235 (MQGSVTEFLK…EQLDAFVDLR (235 aa)). Residues 249-329 (FDPILLRPVD…NWPPASIAED (81 aa)) are alpha C-terminal domain (alpha-CTD).

This sequence belongs to the RNA polymerase alpha chain family. As to quaternary structure, homodimer. The RNAP catalytic core consists of 2 alpha, 1 beta, 1 beta' and 1 omega subunit. When a sigma factor is associated with the core the holoenzyme is formed, which can initiate transcription.

It catalyses the reaction RNA(n) + a ribonucleoside 5'-triphosphate = RNA(n+1) + diphosphate. Its function is as follows. DNA-dependent RNA polymerase catalyzes the transcription of DNA into RNA using the four ribonucleoside triphosphates as substrates. This is DNA-directed RNA polymerase subunit alpha from Aliivibrio salmonicida (strain LFI1238) (Vibrio salmonicida (strain LFI1238)).